Consider the following 231-residue polypeptide: 7-cyano-7-deazaguanine synthase (231 aa).

8-18 (FSGGQDSTTCL) contacts ATP. Residues cysteine 188, cysteine 197, cysteine 200, and cysteine 203 each contribute to the Zn(2+) site.

The protein belongs to the QueC family. The cofactor is Zn(2+).

It catalyses the reaction 7-carboxy-7-deazaguanine + NH4(+) + ATP = 7-cyano-7-deazaguanine + ADP + phosphate + H2O + H(+). The protein operates within purine metabolism; 7-cyano-7-deazaguanine biosynthesis. Its function is as follows. Catalyzes the ATP-dependent conversion of 7-carboxy-7-deazaguanine (CDG) to 7-cyano-7-deazaguanine (preQ(0)). The sequence is that of 7-cyano-7-deazaguanine synthase from Escherichia coli O127:H6 (strain E2348/69 / EPEC).